The primary structure comprises 132 residues: Actin-related protein 2/3 complex subunit 5A (132 aa).

Position 2 is an N-acetylalanine (Ala-2).

Belongs to the ARPC5 family. In terms of assembly, component of the Arp2/3 complex composed of ARP2, ARP3, ARPC1/p41-ARC, ARPC2/p34-ARC, ARPC3/p21-ARC, ARPC4/p20-ARC and ARPC5/p16-ARC. In terms of tissue distribution, expressed at low levels in all tissues with a relatively highest expression in inflorescences.

The protein localises to the cytoplasm. Its subcellular location is the cytoskeleton. It localises to the cell projection. Functionally, functions as a component of the Arp2/3 complex which is involved in regulation of actin polymerization and together with an activating nucleation-promoting factor (NPF) mediates the formation of branched actin networks. Arp2/3 complex plays a critical role in the control of cell morphogenesis via the modulation of cell polarity development. This is Actin-related protein 2/3 complex subunit 5A (ARPC5A) from Arabidopsis thaliana (Mouse-ear cress).